Consider the following 208-residue polypeptide: Small ribosomal subunit protein uS4 (208 aa).

The region spanning 98–161 is the S4 RNA-binding domain; sequence RRLDNTIYRL…RQSPIILEAQ (64 aa).

This sequence belongs to the universal ribosomal protein uS4 family. In terms of assembly, part of the 30S ribosomal subunit. Contacts protein S5. The interaction surface between S4 and S5 is involved in control of translational fidelity.

Functionally, one of the primary rRNA binding proteins, it binds directly to 16S rRNA where it nucleates assembly of the body of the 30S subunit. In terms of biological role, with S5 and S12 plays an important role in translational accuracy. This Solidesulfovibrio magneticus (strain ATCC 700980 / DSM 13731 / RS-1) (Desulfovibrio magneticus) protein is Small ribosomal subunit protein uS4.